The chain runs to 372 residues: Neutral protease 2 homolog MGYG_06241 (372 aa).

The N-terminal stretch at Met-1 to Ala-19 is a signal peptide. Positions Leu-20–Arg-188 are excised as a propeptide. Cystine bridges form between Cys-195-Cys-264 and Cys-271-Cys-289. Residue His-313 participates in Zn(2+) binding. Residue Glu-314 is part of the active site. Zn(2+) is bound by residues His-317 and Asp-328.

Belongs to the peptidase M35 family. Zn(2+) is required as a cofactor.

The protein localises to the secreted. It catalyses the reaction Preferential cleavage of bonds with hydrophobic residues in P1'. Also 3-Asn-|-Gln-4 and 8-Gly-|-Ser-9 bonds in insulin B chain.. In terms of biological role, secreted metalloproteinase that allows assimilation of proteinaceous substrates. Shows high activities on basic nuclear substrates such as histone and protamine. May be involved in virulence. This chain is Neutral protease 2 homolog MGYG_06241, found in Arthroderma gypseum (strain ATCC MYA-4604 / CBS 118893) (Microsporum gypseum).